The following is a 288-amino-acid chain: Executioner caspase (288 aa).

Residue C131 is part of the active site.

The protein belongs to the peptidase C14A family.

May induce host cell apoptosis and contribute of the establishment of a special cell cleavage process in which apoppotic bodies are rescued by the virus and differentiate to form large vesicles in which virion assembles. The polypeptide is Executioner caspase (Spodoptera frugiperda ascovirus 1a (SfAV-1a)).